We begin with the raw amino-acid sequence, 295 residues long: Protoheme IX farnesyltransferase (295 aa).

The next 9 membrane-spanning stretches (helical) occupy residues 9-29, 36-56, 80-100, 108-128, 135-155, 163-183, 209-229, 230-250, and 265-285; these read ITKP…FFLA, FGVF…GCVF, LVSL…GVGL, LAAL…SLYL, GTLV…CAVS, LTLL…IAIF, IMLY…GGYA, GLNY…MAWK, and FVFS…DFQV.

Belongs to the UbiA prenyltransferase family. Protoheme IX farnesyltransferase subfamily.

It is found in the cell inner membrane. It catalyses the reaction heme b + (2E,6E)-farnesyl diphosphate + H2O = Fe(II)-heme o + diphosphate. Its pathway is porphyrin-containing compound metabolism; heme O biosynthesis; heme O from protoheme: step 1/1. Functionally, converts heme B (protoheme IX) to heme O by substitution of the vinyl group on carbon 2 of heme B porphyrin ring with a hydroxyethyl farnesyl side group. This Pseudomonas syringae pv. syringae (strain B728a) protein is Protoheme IX farnesyltransferase.